A 199-amino-acid polypeptide reads, in one-letter code: MEPLKTHTGKAAVLNRINVDTDQIIPKQFLKRIERTGYGRFAFFDWRYLENGEPDPEFELNRKVYEGASILIAGENFGCGSSREHAPWALDDYGFKIIIAPSFADIFHQNCFKNGMLPIRMPYDQWKKLAGQYENQSLNMTVDLENQLIHDSEGKEISFEVDPHWKEMLINGYDEISLTLLLEDDIQQFESKRSSWLQA.

The protein belongs to the LeuD family. LeuD type 1 subfamily. As to quaternary structure, heterodimer of LeuC and LeuD.

The enzyme catalyses (2R,3S)-3-isopropylmalate = (2S)-2-isopropylmalate. Its pathway is amino-acid biosynthesis; L-leucine biosynthesis; L-leucine from 3-methyl-2-oxobutanoate: step 2/4. Catalyzes the isomerization between 2-isopropylmalate and 3-isopropylmalate, via the formation of 2-isopropylmaleate. In Bacillus velezensis (strain DSM 23117 / BGSC 10A6 / LMG 26770 / FZB42) (Bacillus amyloliquefaciens subsp. plantarum), this protein is 3-isopropylmalate dehydratase small subunit.